A 173-amino-acid polypeptide reads, in one-letter code: Protein tyrosine phosphatase type IVA 3 (173 aa).

Residues 8–161 (APVEVSYKNM…YRPKQRLRFK (154 aa)) enclose the Tyrosine-protein phosphatase domain. Residues cysteine 49 and cysteine 104 are joined by a disulfide bond. Aspartate 72 functions as the Proton donor in the catalytic mechanism. Cysteine 104 serves as the catalytic Phosphocysteine intermediate. Arginine 110 serves as a coordination point for substrate. Cysteine 170 bears the Cysteine methyl ester mark. Residue cysteine 170 is the site of S-farnesyl cysteine attachment. Residues 171–173 (CIM) constitute a propeptide, removed in mature form.

The protein belongs to the protein-tyrosine phosphatase family. Interacts with tubulin. Post-translationally, farnesylated. Farnesylation is required for membrane targeting. Unfarnesylated forms are shifted into the nucleus.

It is found in the cell membrane. Its subcellular location is the early endosome. The enzyme catalyses O-phospho-L-tyrosyl-[protein] + H2O = L-tyrosyl-[protein] + phosphate. Its activity is regulated as follows. Inhibited by sodium orthovanadate and peroxovanadium compounds, and by pentamidine. Functionally, protein tyrosine phosphatase which stimulates progression from G1 into S phase during mitosis. Enhances cell proliferation, cell motility and invasive activity, and promotes cancer metastasis. May be involved in the progression of cardiac hypertrophy by inhibiting intracellular calcium mobilization in response to angiotensin II. The polypeptide is Protein tyrosine phosphatase type IVA 3 (PTP4A3) (Bos taurus (Bovine)).